The chain runs to 361 residues: MSDDDNSPISAREAKQLFAELKSAPALVLAVSGGPDSIALMWLAARWQRSLARGPRLTVVTVDHGLRAEAAREAREVKRLATELGLPHRTLRWRGAKPKTGLPAAAREARYRLLMQAARSAGASHVLTAHTRDDQAETLLMRLVRGSGLAGLSAMARLTERDGIVLARPLLDVPKAQLIATLKRAKIGFADDPTNRDTAFTRPRLRALLPQLAAEGGDARSLARLAARLARANAAVEVLTDGAERFLRLRDRDDAPHGPDMRSFEAGAFATLPEEVRLRMLLRAINALGHEGPAELGKVETLLAALDQAIAAGMAAAPRAAVNGRPVLKQTLAGALISLAGGRIQIAPAPARRRKGDRGGS.

Position 32 to 37 (32 to 37 (SGGPDS)) interacts with ATP.

The protein belongs to the tRNA(Ile)-lysidine synthase family.

Its subcellular location is the cytoplasm. It catalyses the reaction cytidine(34) in tRNA(Ile2) + L-lysine + ATP = lysidine(34) in tRNA(Ile2) + AMP + diphosphate + H(+). In terms of biological role, ligates lysine onto the cytidine present at position 34 of the AUA codon-specific tRNA(Ile) that contains the anticodon CAU, in an ATP-dependent manner. Cytidine is converted to lysidine, thus changing the amino acid specificity of the tRNA from methionine to isoleucine. In Bradyrhizobium diazoefficiens (strain JCM 10833 / BCRC 13528 / IAM 13628 / NBRC 14792 / USDA 110), this protein is tRNA(Ile)-lysidine synthase.